An 810-amino-acid chain; its full sequence is Calpain-3 (810 aa).

Positions 9–27 are enriched in low complexity; that stretch reads VAQQTAAGSVPSTTSTTTE. The segment at 9–31 is disordered; it reads VAQQTAAGSVPSTTSTTTEGTGG. Positions 68–410 constitute a Calpain catalytic domain; that stretch reads LYEDPDFPPN…FTKLEICNLT (343 aa). Residues Cys123, His327, and Asn351 contribute to the active site. Residues 411 to 579 are domain III; it reads PDTLEADKLQ…KRSLSEEVEN (169 aa). The disordered stretch occupies residues 578 to 639; that stretch reads ENMIEADRPS…SAKAREKSEE (62 aa). The linker stretch occupies residues 580–638; the sequence is MIEADRPSKKKKGKPIIFVSDRANSNKELTTDEDAGKDGEKTHVDEKKRSSAKAREKSE. Residues 613 to 639 show a composition bias toward basic and acidic residues; the sequence is DAGKDGEKTHVDEKKRSSAKAREKSEE. EF-hand domains lie at 638-672, 681-714, 711-746, and 776-810; these read EEET…VVKK, FELE…DKIK, DKIK…AGFR, and VRLD…TMYA. The tract at residues 639–809 is domain IV; the sequence is EETQFRNIFR…VLEWLQLTMY (171 aa). Ca(2+) contacts are provided by Ala651, Asp654, Glu656, Glu661, Asp694, Asp696, Ser698, Lys700, Glu705, Asp724, Asp726, Ser728, Thr730, Glu735, Asp789, Asp791, Asp793, and Ile795.

It belongs to the peptidase C2 family. As to quaternary structure, homodimer; via EF-hand domain 4. Interacts with TTN/titin. Interacts with CMYA5; this interaction, which results in CMYA5 proteolysis, may protect CAPN3 from autolysis. Interacts with SIMC1. Interacts with UTP25; the interaction is required for CAPN3 translocation to the nucleolus. In terms of tissue distribution, skeletal muscle. Low levels in spleen, intestine and bone.

The protein resides in the cytoplasm. It localises to the nucleus. The protein localises to the nucleolus. It catalyses the reaction Broad endopeptidase activity.. With respect to regulation, activated by micromolar concentrations of calcium and inhibited by calpastatin. Functionally, calcium-regulated non-lysosomal thiol-protease. Proteolytically cleaves CTBP1. Mediates, with UTP25, the proteasome-independent degradation of p53/TP53. This is Calpain-3 (CAPN3) from Gallus gallus (Chicken).